A 226-amino-acid polypeptide reads, in one-letter code: Cytidylate kinase (226 aa).

An ATP-binding site is contributed by 10 to 18; the sequence is GPASSGKST.

The protein localises to the cytoplasm. The enzyme catalyses CMP + ATP = CDP + ADP. The catalysed reaction is dCMP + ATP = dCDP + ADP. This Streptococcus pyogenes serotype M6 (strain ATCC BAA-946 / MGAS10394) protein is Cytidylate kinase.